Reading from the N-terminus, the 432-residue chain is D-amino acid dehydrogenase (432 aa).

3–17 (VVVLGSGVVGVTSAW) serves as a coordination point for FAD.

This sequence belongs to the DadA oxidoreductase family. It depends on FAD as a cofactor.

The enzyme catalyses a D-alpha-amino acid + A + H2O = a 2-oxocarboxylate + AH2 + NH4(+). It participates in amino-acid degradation; D-alanine degradation; NH(3) and pyruvate from D-alanine: step 1/1. Functionally, oxidative deamination of D-amino acids. The protein is D-amino acid dehydrogenase of Enterobacter sp. (strain 638).